A 28-amino-acid chain; its full sequence is Ranatuerin-2AVa (28 aa).

C23 and C28 are disulfide-bonded.

Expressed by the skin glands.

It localises to the secreted. Functionally, has antibacterial activity against the Gram positive bacterium L.lactis. The polypeptide is Ranatuerin-2AVa (Rana arvalis (Moor frog)).